Reading from the N-terminus, the 298-residue chain is Diphthine methyl ester synthase (298 aa).

Residues Leu-9, Asp-85, Gly-88, 113-114, Leu-164, Leu-222, and His-247 each bind S-adenosyl-L-methionine; that span reads SV.

The protein belongs to the diphthine synthase family.

The protein resides in the cytoplasm. It catalyses the reaction 2-[(3S)-amino-3-carboxypropyl]-L-histidyl-[translation elongation factor 2] + 4 S-adenosyl-L-methionine = diphthine methyl ester-[translation elongation factor 2] + 4 S-adenosyl-L-homocysteine + 3 H(+). Its pathway is protein modification; peptidyl-diphthamide biosynthesis. In terms of biological role, S-adenosyl-L-methionine-dependent methyltransferase that catalyzes four methylations of the modified target histidine residue in translation elongation factor 2 (EF-2), to form an intermediate called diphthine methyl ester. The four successive methylation reactions represent the second step of diphthamide biosynthesis. This chain is Diphthine methyl ester synthase (DPH5), found in Eremothecium gossypii (strain ATCC 10895 / CBS 109.51 / FGSC 9923 / NRRL Y-1056) (Yeast).